Here is a 188-residue protein sequence, read N- to C-terminus: Pyridoxal 5'-phosphate synthase subunit PdxT (188 aa).

Residue 47–49 (GES) participates in L-glutamine binding. Cys-79 serves as the catalytic Nucleophile. L-glutamine contacts are provided by residues Arg-105 and 134 to 135 (IR). Active-site charge relay system residues include His-170 and Glu-172.

This sequence belongs to the glutaminase PdxT/SNO family. In terms of assembly, in the presence of PdxS, forms a dodecamer of heterodimers. Only shows activity in the heterodimer.

The catalysed reaction is aldehydo-D-ribose 5-phosphate + D-glyceraldehyde 3-phosphate + L-glutamine = pyridoxal 5'-phosphate + L-glutamate + phosphate + 3 H2O + H(+). The enzyme catalyses L-glutamine + H2O = L-glutamate + NH4(+). It functions in the pathway cofactor biosynthesis; pyridoxal 5'-phosphate biosynthesis. Its function is as follows. Catalyzes the hydrolysis of glutamine to glutamate and ammonia as part of the biosynthesis of pyridoxal 5'-phosphate. The resulting ammonia molecule is channeled to the active site of PdxS. The protein is Pyridoxal 5'-phosphate synthase subunit PdxT of Listeria innocua serovar 6a (strain ATCC BAA-680 / CLIP 11262).